Reading from the N-terminus, the 452-residue chain is Protein disulfide-isomerase TMX3 (452 aa).

Residues 1–26 (MAAAGLCFILAIVSSTSLLASVPVSA) form the signal peptide. The 102-residue stretch at 27 to 128 (LVEDLDDSFK…KEDIVEFANR (102 aa)) folds into the Thioredoxin domain. At 27–375 (LVEDLDDSFK…TVVSVFKSSP (349 aa)) the chain is on the lumenal side. Active-site nucleophile residues include Cys53 and Cys56. Cysteines 53 and 56 form a disulfide. N-linked (GlcNAc...) asparagine glycosylation is found at Asn258 and Asn313. Residues 376–396 (LLGCFLFGLPLGVISIMCYGI) traverse the membrane as a helical segment. The Cytoplasmic portion of the chain corresponds to 397–452 (CTADTEDGSEEMTRKDVIDQNASDEGSDEEEEKGREITDVSDEDQQEKDFMEKKID). Residues 405 to 452 (SEEMTRKDVIDQNASDEGSDEEEEKGREITDVSDEDQQEKDFMEKKID) form a disordered region. Positions 443–452 (EKDFMEKKID) are enriched in basic and acidic residues. A Di-lysine motif motif is present at residues 449 to 452 (KKID).

It belongs to the protein disulfide isomerase family.

Its subcellular location is the endoplasmic reticulum membrane. It catalyses the reaction Catalyzes the rearrangement of -S-S- bonds in proteins.. Functionally, probable disulfide isomerase, which participates in the folding of proteins containing disulfide bonds. May act as a dithiol oxidase. Acts as a regulator of endoplasmic reticulum-mitochondria contact sites via its ability to regulate redox signals. The polypeptide is Protein disulfide-isomerase TMX3 (tmx3) (Xenopus laevis (African clawed frog)).